The sequence spans 1100 residues: Guanylate cyclase 2G (1100 aa).

The first 43 residues, Met-1–Ala-43, serve as a signal peptide directing secretion. Residues Ala-44–Ala-481 are Extracellular-facing. N-linked (GlcNAc...) asparagine glycans are attached at residues Asn-55, Asn-85, Asn-94, Asn-418, and Asn-443. A helical transmembrane segment spans residues Val-482–Leu-502. At Trp-503 to Leu-1100 the chain is on the cytoplasmic side. The Protein kinase domain occupies Ser-549–Leu-826. The 131-residue stretch at Thr-901–Glu-1031 folds into the Guanylate cyclase domain.

Belongs to the adenylyl cyclase class-4/guanylyl cyclase family. In terms of assembly, homooligomer. May interact with NPR1/GC-A. N-glycosylated. Expressed in lung, kidney and skeletal muscle. Low levels in intestine.

The protein localises to the cell membrane. The protein resides in the cytoplasm. The catalysed reaction is GTP = 3',5'-cyclic GMP + diphosphate. The polypeptide is Guanylate cyclase 2G (Gucy2g) (Rattus norvegicus (Rat)).